The chain runs to 288 residues: Ribosomal RNA small subunit methyltransferase A (288 aa).

S-adenosyl-L-methionine contacts are provided by asparagine 28, leucine 30, glycine 55, glutamate 77, aspartate 103, and asparagine 123.

The protein belongs to the class I-like SAM-binding methyltransferase superfamily. rRNA adenine N(6)-methyltransferase family. RsmA subfamily.

It localises to the cytoplasm. The catalysed reaction is adenosine(1518)/adenosine(1519) in 16S rRNA + 4 S-adenosyl-L-methionine = N(6)-dimethyladenosine(1518)/N(6)-dimethyladenosine(1519) in 16S rRNA + 4 S-adenosyl-L-homocysteine + 4 H(+). Specifically dimethylates two adjacent adenosines (A1518 and A1519) in the loop of a conserved hairpin near the 3'-end of 16S rRNA in the 30S particle. May play a critical role in biogenesis of 30S subunits. This chain is Ribosomal RNA small subunit methyltransferase A, found in Xanthobacter autotrophicus (strain ATCC BAA-1158 / Py2).